We begin with the raw amino-acid sequence, 100 residues long: Small ribosomal subunit protein uS14c (100 aa).

This sequence belongs to the universal ribosomal protein uS14 family. As to quaternary structure, part of the 30S ribosomal subunit.

It localises to the plastid. The protein localises to the chloroplast. Its function is as follows. Binds 16S rRNA, required for the assembly of 30S particles. The polypeptide is Small ribosomal subunit protein uS14c (Stigeoclonium helveticum (Green alga)).